Here is a 176-residue protein sequence, read N- to C-terminus: ATP synthase subunit b (176 aa).

Residues 18-38 (FGLDATVWVSIAMLVFLGILV) form a helical membrane-spanning segment.

Belongs to the ATPase B chain family. As to quaternary structure, F-type ATPases have 2 components, F(1) - the catalytic core - and F(0) - the membrane proton channel. F(1) has five subunits: alpha(3), beta(3), gamma(1), delta(1), epsilon(1). F(0) has three main subunits: a(1), b(2) and c(10-14). The alpha and beta chains form an alternating ring which encloses part of the gamma chain. F(1) is attached to F(0) by a central stalk formed by the gamma and epsilon chains, while a peripheral stalk is formed by the delta and b chains.

Its subcellular location is the cell inner membrane. Functionally, f(1)F(0) ATP synthase produces ATP from ADP in the presence of a proton or sodium gradient. F-type ATPases consist of two structural domains, F(1) containing the extramembraneous catalytic core and F(0) containing the membrane proton channel, linked together by a central stalk and a peripheral stalk. During catalysis, ATP synthesis in the catalytic domain of F(1) is coupled via a rotary mechanism of the central stalk subunits to proton translocation. Its function is as follows. Component of the F(0) channel, it forms part of the peripheral stalk, linking F(1) to F(0). In Sphingopyxis alaskensis (strain DSM 13593 / LMG 18877 / RB2256) (Sphingomonas alaskensis), this protein is ATP synthase subunit b.